The sequence spans 496 residues: NADP-dependent glyceraldehyde-3-phosphate dehydrogenase (496 aa).

Substrate is bound by residues Arg-116 and Asn-169 to Tyr-170. Residues Lys-192, Thr-195, and Asp-230 each coordinate NADP(+). Gly-245–Gly-249 provides a ligand contact to NAD(+). Catalysis depends on Glu-264, which acts as the Proton acceptor. Residue Arg-297–Thr-299 participates in substrate binding. Cys-298 serves as the catalytic Nucleophile. NADP(+) is bound at residue Glu-391. Arg-451 provides a ligand contact to substrate.

This sequence belongs to the aldehyde dehydrogenase family.

It is found in the cytoplasm. It carries out the reaction D-glyceraldehyde 3-phosphate + NADP(+) + H2O = (2R)-3-phosphoglycerate + NADPH + 2 H(+). In terms of biological role, important as a means of generating NADPH for biosynthetic reactions. This is NADP-dependent glyceraldehyde-3-phosphate dehydrogenase (GAPN) from Pisum sativum (Garden pea).